Reading from the N-terminus, the 417-residue chain is Squalene synthase (417 aa).

2 residues coordinate NADP(+): Arg-52 and Arg-77. The Mg(2+) site is built by Asp-80, Glu-83, and Asp-84. Residue Arg-218 participates in NADP(+) binding. A helical membrane pass occupies residues 284–304; the sequence is SVFNFCAIPQVMAIATLAACY. Lys-315 and Arg-317 together coordinate NADP(+). The chain crosses the membrane as a helical span at residues 384–404; sequence PIYLSFVMLLAALSWQYLTTL.

Belongs to the phytoene/squalene synthase family. Requires Mg(2+) as cofactor. In terms of tissue distribution, widely expressed.

The protein resides in the endoplasmic reticulum membrane. It carries out the reaction 2 (2E,6E)-farnesyl diphosphate + NADPH + H(+) = squalene + 2 diphosphate + NADP(+). The catalysed reaction is 2 (2E,6E)-farnesyl diphosphate + NADH + H(+) = squalene + 2 diphosphate + NAD(+). The enzyme catalyses 2 (2E,6E)-farnesyl diphosphate = presqualene diphosphate + diphosphate. It catalyses the reaction presqualene diphosphate + NADH + H(+) = squalene + diphosphate + NAD(+). It carries out the reaction presqualene diphosphate + NADPH + H(+) = squalene + diphosphate + NADP(+). The protein operates within terpene metabolism; lanosterol biosynthesis; lanosterol from farnesyl diphosphate: step 1/3. Functionally, catalyzes the condensation of 2 farnesyl pyrophosphate (FPP) moieties to form squalene. Proceeds in two distinct steps. In the first half-reaction, two molecules of FPP react to form the stable presqualene diphosphate intermediate (PSQPP), with concomitant release of a proton and a molecule of inorganic diphosphate. In the second half-reaction, PSQPP undergoes heterolysis, isomerization, and reduction with NADPH or NADH to form squalene. It is the first committed enzyme of the sterol biosynthesis pathway. The polypeptide is Squalene synthase (FDFT1) (Homo sapiens (Human)).